Consider the following 323-residue polypeptide: Forkhead transcription factor fkh-6 (323 aa).

The segment at residues 21–122 (KPPYSYVALI…DNGNFKRRRV (102 aa)) is a DNA-binding region (fork-head).

The protein resides in the nucleus. Probable transcription factor. Binds to the DNA sequence motif 5'-[TA]TGTT[TG]T[TG][ATG]TT-3'. Regulates sexual dimorphism in the gonad, promoting male gonadal cell fates in chromosomally (XO) male animals, yet plays a role in gonadogenesis in both sexes; probably acts downstream of terminal regulator of sex determination tra-1, to control early gonadogenesis. Positively modulates expression of homeobox protein egl-5, probably acting indirectly, during early gonadal development. The sequence is that of Forkhead transcription factor fkh-6 from Caenorhabditis elegans.